The chain runs to 93 residues: Large ribosomal subunit protein uL23cz/uL23cy (93 aa).

This sequence belongs to the universal ribosomal protein uL23 family. Part of the 50S ribosomal subunit.

The protein localises to the plastid. It is found in the chloroplast. Functionally, binds to 23S rRNA. In Platanus occidentalis (Sycamore), this protein is Large ribosomal subunit protein uL23cz/uL23cy (rpl23-A).